Reading from the N-terminus, the 509-residue chain is Maturase K (509 aa).

It belongs to the intron maturase 2 family. MatK subfamily.

Its subcellular location is the plastid. It is found in the chloroplast. In terms of biological role, usually encoded in the trnK tRNA gene intron. Probably assists in splicing its own and other chloroplast group II introns. The protein is Maturase K of Chamaecyparis obtusa (Hinoki false-cypress).